We begin with the raw amino-acid sequence, 484 residues long: Cobyric acid synthase (484 aa).

Residues 251-438 (ALKIAVPVLP…LHGLFASDAY (188 aa)) form the GATase cobBQ-type domain. Catalysis depends on cysteine 333, which acts as the Nucleophile. Histidine 430 is an active-site residue.

This sequence belongs to the CobB/CobQ family. CobQ subfamily.

Its pathway is cofactor biosynthesis; adenosylcobalamin biosynthesis. Functionally, catalyzes amidations at positions B, D, E, and G on adenosylcobyrinic A,C-diamide. NH(2) groups are provided by glutamine, and one molecule of ATP is hydrogenolyzed for each amidation. The sequence is that of Cobyric acid synthase from Rhizobium etli (strain CIAT 652).